Consider the following 152-residue polypeptide: Ribonuclease H (152 aa).

One can recognise an RNase H type-1 domain in the interval 6-147 (KKNRVIAYTD…ADELANKAIA (142 aa)). Mg(2+) contacts are provided by Asp-15, Glu-53, Asp-75, and Asp-139.

It belongs to the RNase H family. As to quaternary structure, monomer. Requires Mg(2+) as cofactor.

It is found in the cytoplasm. The catalysed reaction is Endonucleolytic cleavage to 5'-phosphomonoester.. Endonuclease that specifically degrades the RNA of RNA-DNA hybrids. This chain is Ribonuclease H, found in Francisella tularensis subsp. tularensis (strain FSC 198).